Here is a 141-residue protein sequence, read N- to C-terminus: Small ribosomal subunit protein bS6 (141 aa).

The interval 110 to 141 is disordered; sequence SRTKVSDQPAAVEAAEAPAAPAAQEESAPASA. The segment covering 117-141 has biased composition (low complexity); the sequence is QPAAVEAAEAPAAPAAQEESAPASA.

It belongs to the bacterial ribosomal protein bS6 family.

Functionally, binds together with bS18 to 16S ribosomal RNA. The protein is Small ribosomal subunit protein bS6 of Acidobacterium capsulatum (strain ATCC 51196 / DSM 11244 / BCRC 80197 / JCM 7670 / NBRC 15755 / NCIMB 13165 / 161).